A 133-amino-acid polypeptide reads, in one-letter code: Large ribosomal subunit protein bL19 (133 aa).

The protein belongs to the bacterial ribosomal protein bL19 family.

In terms of biological role, this protein is located at the 30S-50S ribosomal subunit interface and may play a role in the structure and function of the aminoacyl-tRNA binding site. The protein is Large ribosomal subunit protein bL19 of Stenotrophomonas maltophilia (strain R551-3).